The chain runs to 271 residues: tRNA pseudouridine synthase A (271 aa).

Asp-52 acts as the Nucleophile in catalysis. Tyr-110 contacts substrate.

This sequence belongs to the tRNA pseudouridine synthase TruA family. In terms of assembly, homodimer.

The enzyme catalyses uridine(38/39/40) in tRNA = pseudouridine(38/39/40) in tRNA. In terms of biological role, formation of pseudouridine at positions 38, 39 and 40 in the anticodon stem and loop of transfer RNAs. This chain is tRNA pseudouridine synthase A, found in Maridesulfovibrio salexigens (strain ATCC 14822 / DSM 2638 / NCIMB 8403 / VKM B-1763) (Desulfovibrio salexigens).